The following is a 584-amino-acid chain: HERV-H_2q24.3 provirus ancestral Env polyprotein (584 aa).

The N-terminal stretch at M1–P35 is a signal peptide. Over L36–V523 the chain is Extracellular. N47 is a glycosylation site (N-linked (GlcNAc...) asparagine). The CXXC signature appears at C64–C67. N-linked (GlcNAc...) asparagine glycosylation is found at N199, N222, N265, N283, N352, and N370. The segment at V388–G408 is fusion peptide. The CKS-17 signature appears at L454–L470. C471 and C478 are oxidised to a cystine. Positions C471–C479 match the CX6CC motif. Residue N483 is glycosylated (N-linked (GlcNAc...) asparagine). A helical transmembrane segment spans residues L524–F544. The Cytoplasmic segment spans residues R545–A584.

This sequence belongs to the gamma type-C retroviral envelope protein family. HERV class-I H env subfamily. In terms of assembly, the surface (SU) and transmembrane (TM) proteins form a heterodimer. SU and TM are attached by noncovalent interactions or by a labile interchain disulfide bond. In terms of processing, specific enzymatic cleavages in vivo yield the mature SU and TM proteins. Post-translationally, the CXXC motif is highly conserved across a broad range of retroviral envelope proteins. It is thought to participate in the formation of a labile disulfide bond possibly with the CX6CC motif present in the transmembrane protein. Isomerization of the intersubunit disulfide bond to an SU intrachain disulfide bond is thought to occur upon receptor recognition in order to allow membrane fusion. As to expression, low expression in skin and testis. No expression in several cell lines.

The protein resides in the virion. The protein localises to the cell membrane. Functionally, retroviral envelope proteins mediate receptor recognition and membrane fusion during early infection. Endogenous envelope proteins may have kept, lost or modified their original function during evolution. This endogenous envelope protein has lost its original fusogenic properties but has immunosuppressive properties in vivo. SU mediates receptor recognition. In terms of biological role, TM anchors the envelope heterodimer to the viral membrane through one transmembrane domain. The other hydrophobic domain, called fusion peptide, mediates fusion of the viral membrane with the target cell membrane. This is HERV-H_2q24.3 provirus ancestral Env polyprotein from Homo sapiens (Human).